The following is a 227-amino-acid chain: Lysosomal-associated transmembrane protein 4B (227 aa).

Transmembrane regions (helical) follow at residues 26–46 (ILLG…LLSA), 72–92 (MCIA…ATYG), 100–120 (WIIP…LVAI), and 153–173 (CLVL…GYLI). The required for NEDD4 interaction stretch occupies residues 205–222 (PPYDDATAVTGTAKEPPP).

The protein belongs to the LAPTM4/LAPTM5 transporter family. In terms of assembly, homooligomer; upon reaching the lysosomes. Interacts with MCOLN1. Interacts with NEDD4; may play a role in the lysosomal sorting of LAPTM4B; enhances HGS association with NEDD4; mediates inhibition of EGFR degradation. Interacts with PIP5K1C; promotes SNX5 association with LAPTM4B; kinase activity of PIP5K1C is required; interaction is regulated by phosphatidylinositol 4,5-bisphosphate generated by PIP5K1C. Interacts with HGS; promotes HGS ubiquitination. Interacts with SNX5. Interacts with SLC3A2 and SLC7A5; recruits SLC3A2 and SLC7A5 to lysosomes to promote leucine uptake into these organelles and is required for mTORC1 activation. Interacts with LRRC32; decreases TGFB1 production in regulatory T cells. Interacts with BECN1; competes with EGFR for LAPTM4B binding; regulates EGFR activity. Interacts with EGFR; positively correlates with EGFR activation. Post-translationally, undergoes proteolytic cleavage following delivery to the lysosomes. In terms of processing, ubiquitinated by NEDD4.

Its subcellular location is the endomembrane system. It is found in the late endosome membrane. The protein localises to the cell membrane. It localises to the cell projection. The protein resides in the lysosome membrane. Its subcellular location is the endosome membrane. It is found in the endosome. The protein localises to the multivesicular body membrane. It localises to the multivesicular body lumen. Functionally, required for optimal lysosomal function. Blocks EGF-stimulated EGFR intraluminal sorting and degradation. Conversely by binding with the phosphatidylinositol 4,5-bisphosphate, regulates its PIP5K1C interaction, inhibits HGS ubiquitination and relieves LAPTM4B inhibition of EGFR degradation. Recruits SLC3A2 and SLC7A5 (the Leu transporter) to the lysosome, promoting entry of leucine and other essential amino acid (EAA) into the lysosome, stimulating activation of proton-transporting vacuolar (V)-ATPase protein pump (V-ATPase) and hence mTORC1 activation. Plays a role as negative regulator of TGFB1 production in regulatory T cells. Binds ceramide and facilitates its exit from late endosome in order to control cell death pathways. This chain is Lysosomal-associated transmembrane protein 4B, found in Rattus norvegicus (Rat).